The chain runs to 85 residues: U4-theraphotoxin-Hhn1e (85 aa).

The signal sequence occupies residues 1-22; it reads MKVTLIAILTCAAVLVLHTTAA. Residues 23-48 constitute a propeptide that is removed on maturation; it reads EELEAESQLMEVGMPDTELAAVDEER. 3 disulfide bridges follow: cysteine 52–cysteine 66, cysteine 56–cysteine 77, and cysteine 71–cysteine 82.

It belongs to the neurotoxin 12 (Hwtx-2) family. 02 (Hwtx-2) subfamily. Expressed by the venom gland.

It is found in the secreted. Functionally, postsynaptic neurotoxin. The polypeptide is U4-theraphotoxin-Hhn1e (Cyriopagopus hainanus (Chinese bird spider)).